The sequence spans 120 residues: NAD(P)H-quinone oxidoreductase subunit 3 (120 aa).

3 consecutive transmembrane segments (helical) span residues 7 to 27 (YEYFLGFLLACSLVPILSLTA), 64 to 84 (MFALVFVVFDVETVFLYPWAV), and 89 to 109 (LGLLAFVEALIFIAILVVALV).

The protein belongs to the complex I subunit 3 family. In terms of assembly, NDH-1 can be composed of about 15 different subunits; different subcomplexes with different compositions have been identified which probably have different functions.

Its subcellular location is the cellular thylakoid membrane. It catalyses the reaction a plastoquinone + NADH + (n+1) H(+)(in) = a plastoquinol + NAD(+) + n H(+)(out). The enzyme catalyses a plastoquinone + NADPH + (n+1) H(+)(in) = a plastoquinol + NADP(+) + n H(+)(out). In terms of biological role, NDH-1 shuttles electrons from an unknown electron donor, via FMN and iron-sulfur (Fe-S) centers, to quinones in the respiratory and/or the photosynthetic chain. The immediate electron acceptor for the enzyme in this species is believed to be plastoquinone. Couples the redox reaction to proton translocation, and thus conserves the redox energy in a proton gradient. Cyanobacterial NDH-1 also plays a role in inorganic carbon-concentration. The protein is NAD(P)H-quinone oxidoreductase subunit 3 of Microcystis aeruginosa (strain NIES-843 / IAM M-2473).